Reading from the N-terminus, the 752-residue chain is Coiled-coil domain-containing protein 157 (752 aa).

A compositionally biased stretch (polar residues) spans 135–154 (QQPLPQKGANQRETPTSKPT). Disordered regions lie at residues 135–163 (QQPLPQKGANQRETPTSKPTTKGEPARSP) and 316–336 (QALKQEQGARRRQAEEDEQCL). Coiled-coil stretches lie at residues 276-544 (AAEQ…LLVA) and 579-615 (DHMERQVQSNDIRIRVLQEENGRLQSMLSKIREVAQQ). Over residues 316 to 329 (QALKQEQGARRRQA) the composition is skewed to basic and acidic residues. Disordered regions lie at residues 620–707 (LIPQ…QPSK) and 731–752 (RKRLSPGRGQASSAHQPQERPM). Positions 628–648 (SPSSKGTQGATPPVQAKSTSP) are enriched in polar residues. The span at 671–692 (TSPPRQPCTSPPRQPCTSPPRQ) shows a compositional bias: pro residues. Residues 693-707 (PCTSPSRQPCSQPSK) are compositionally biased toward polar residues.

In Homo sapiens (Human), this protein is Coiled-coil domain-containing protein 157 (CCDC157).